Here is a 136-residue protein sequence, read N- to C-terminus: Calcitonin (136 aa).

The first 25 residues, 1-25 (MGFLKFSPFLVVSILLLYQACGLQA), serve as a signal peptide directing secretion. Residues 26-82 (VPLRSTLESSPGMATLSEEEARLLAALVQNYMQMKVRELEQEEEQEAEGSSLDSPRS) constitute a propeptide that is removed on maturation. Residue serine 42 is modified to Phosphoserine. A disordered region spans residues 64 to 84 (LEQEEEQEAEGSSLDSPRSKR). A disulfide bridge connects residues cysteine 85 and cysteine 91. N-linked (GlcNAc...) asparagine glycosylation occurs at asparagine 87. The disordered stretch occupies residues 114–136 (GAPGKKRDMAKDLETNHHPYFGN). At proline 116 the chain carries Proline amide. Positions 118–130 (KKRDMAKDLETNH) are enriched in basic and acidic residues. A propeptide spanning residues 121-136 (DMAKDLETNHHPYFGN) is cleaved from the precursor.

This sequence belongs to the calcitonin family.

Its subcellular location is the secreted. In terms of biological role, calcitonin is a peptide hormone that causes a rapid but short-lived drop in the level of calcium and phosphate in blood by promoting the incorporation of those ions in the bones. Calcitonin function is mediated by the calcitonin receptor/CALCR and the CALCR-RAMP2 (AMYR2) receptor complex. This Rattus norvegicus (Rat) protein is Calcitonin.